Consider the following 509-residue polypeptide: Cardiolipin synthase 1 (509 aa).

3 helical membrane passes run 4 to 24 (PIIQLLLIFTIVSIVPFLLNT), 30 to 50 (YTFVGVLWSITIVGISFVIFI), and 59 to 79 (LAWFLVLALLPVVGVLLYSIF). 2 PLD phosphodiesterase domains span residues 238–265 (VNYRNHRKIVIVDGEIGFTGGLNVGDEY) and 422–449 (KDGFMHAKILLVDDKIATIGTANMDVRS). Active-site residues include H243, K245, D250, H427, K429, and D434.

This sequence belongs to the phospholipase D family. Cardiolipin synthase subfamily.

The protein resides in the cell membrane. It carries out the reaction 2 a 1,2-diacyl-sn-glycero-3-phospho-(1'-sn-glycerol) = a cardiolipin + glycerol. Functionally, catalyzes the reversible phosphatidyl group transfer from one phosphatidylglycerol molecule to another to form cardiolipin (CL) (diphosphatidylglycerol) and glycerol. This is Cardiolipin synthase 1 (cls1) from Bacillus anthracis.